Here is a 106-residue protein sequence, read N- to C-terminus: Cell division topological specificity factor (106 aa).

It belongs to the MinE family.

In terms of biological role, prevents the cell division inhibition by proteins MinC and MinD at internal division sites while permitting inhibition at polar sites. This ensures cell division at the proper site by restricting the formation of a division septum at the midpoint of the long axis of the cell. The chain is Cell division topological specificity factor from Prochlorococcus marinus (strain SARG / CCMP1375 / SS120).